Consider the following 213-residue polypeptide: Pyridoxine/pyridoxamine 5'-phosphate oxidase (213 aa).

Substrate-binding positions include 9–12 and Lys67; that span reads RLEY. FMN-binding positions include 62–67, 77–78, Arg83, Lys84, and Gln106; these read RIVLLK and YT. Residues Tyr124, Arg128, and Ser132 each coordinate substrate. Residues 141–142 and Trp185 each bind FMN; that span reads QS. 191–193 contacts substrate; sequence RLH. Residue Arg195 coordinates FMN.

The protein belongs to the pyridoxamine 5'-phosphate oxidase family. In terms of assembly, homodimer. FMN is required as a cofactor.

It carries out the reaction pyridoxamine 5'-phosphate + O2 + H2O = pyridoxal 5'-phosphate + H2O2 + NH4(+). The enzyme catalyses pyridoxine 5'-phosphate + O2 = pyridoxal 5'-phosphate + H2O2. The protein operates within cofactor metabolism; pyridoxal 5'-phosphate salvage; pyridoxal 5'-phosphate from pyridoxamine 5'-phosphate: step 1/1. It functions in the pathway cofactor metabolism; pyridoxal 5'-phosphate salvage; pyridoxal 5'-phosphate from pyridoxine 5'-phosphate: step 1/1. Functionally, catalyzes the oxidation of either pyridoxine 5'-phosphate (PNP) or pyridoxamine 5'-phosphate (PMP) into pyridoxal 5'-phosphate (PLP). This chain is Pyridoxine/pyridoxamine 5'-phosphate oxidase, found in Chromobacterium violaceum (strain ATCC 12472 / DSM 30191 / JCM 1249 / CCUG 213 / NBRC 12614 / NCIMB 9131 / NCTC 9757 / MK).